A 196-amino-acid chain; its full sequence is MSRYRGPRFKKIRRLGTLPGLTSKRPRSGSDLKNPLRSVKRSQYRIRLEEKQKLRFHYGLTERQLLRYVHIAGKAKGSTGQVLLQLLEMRLDNILFRLGMASTIPGARQLVNHRHILVNGRIVDIPSYRCKPRDIITTKDKQRSKALIQNYIASSPHEELPNHLTIDSFQYKGLVNQIIDSKWIGLKINELLVVEY.

Positions 15-36 are disordered; it reads LGTLPGLTSKRPRSGSDLKNPL. The 62-residue stretch at 89 to 150 folds into the S4 RNA-binding domain; it reads MRLDNILFRL…KQRSKALIQN (62 aa).

This sequence belongs to the universal ribosomal protein uS4 family. In terms of assembly, part of the 30S ribosomal subunit. Contacts protein S5. The interaction surface between S4 and S5 is involved in control of translational fidelity.

The protein resides in the plastid. It localises to the chloroplast. Functionally, one of the primary rRNA binding proteins, it binds directly to 16S rRNA where it nucleates assembly of the body of the 30S subunit. In terms of biological role, with S5 and S12 plays an important role in translational accuracy. The polypeptide is Small ribosomal subunit protein uS4c (rps4) (Yucca filamentosa (Bear-grass)).